The chain runs to 371 residues: Peptide chain release factor 2 (371 aa).

The residue at position 253 (glutamine 253) is an N5-methylglutamine.

Belongs to the prokaryotic/mitochondrial release factor family. In terms of processing, methylated by PrmC. Methylation increases the termination efficiency of RF2.

The protein resides in the cytoplasm. In terms of biological role, peptide chain release factor 2 directs the termination of translation in response to the peptide chain termination codons UGA and UAA. The chain is Peptide chain release factor 2 from Mycobacterium ulcerans (strain Agy99).